Here is a 51-residue protein sequence, read N- to C-terminus: Large ribosomal subunit protein bL32c (51 aa).

Belongs to the bacterial ribosomal protein bL32 family.

The protein localises to the plastid. The protein resides in the chloroplast. The protein is Large ribosomal subunit protein bL32c of Oenothera elata subsp. hookeri (Hooker's evening primrose).